The following is a 404-amino-acid chain: CCA-adding enzyme (404 aa).

Residues Gly-27 and Arg-30 each contribute to the ATP site. Positions 27 and 30 each coordinate CTP. Mg(2+)-binding residues include Asp-40 and Asp-42. Arg-111, Asp-154, Arg-157, Arg-160, and Arg-163 together coordinate ATP. Residues Arg-111, Asp-154, Arg-157, Arg-160, and Arg-163 each coordinate CTP.

Belongs to the tRNA nucleotidyltransferase/poly(A) polymerase family. Bacterial CCA-adding enzyme type 3 subfamily. In terms of assembly, homodimer. It depends on Mg(2+) as a cofactor.

It carries out the reaction a tRNA precursor + 2 CTP + ATP = a tRNA with a 3' CCA end + 3 diphosphate. The enzyme catalyses a tRNA with a 3' CCA end + 2 CTP + ATP = a tRNA with a 3' CCACCA end + 3 diphosphate. Functionally, catalyzes the addition and repair of the essential 3'-terminal CCA sequence in tRNAs without using a nucleic acid template. Adds these three nucleotides in the order of C, C, and A to the tRNA nucleotide-73, using CTP and ATP as substrates and producing inorganic pyrophosphate. tRNA 3'-terminal CCA addition is required both for tRNA processing and repair. Also involved in tRNA surveillance by mediating tandem CCA addition to generate a CCACCA at the 3' terminus of unstable tRNAs. While stable tRNAs receive only 3'-terminal CCA, unstable tRNAs are marked with CCACCA and rapidly degraded. This is CCA-adding enzyme from Geobacillus thermodenitrificans (strain NG80-2).